The primary structure comprises 412 residues: NADH-quinone oxidoreductase subunit 4 (412 aa).

It belongs to the complex I 49 kDa subunit family. As to quaternary structure, NDH-1 is composed of at least 14 different subunits, Nqo1 to Nqo14. The complex has a L-shaped structure, with the hydrophobic arm (subunits Nqo7, Nqo8, Nqo10 to Nqo14) embedded in the inner membrane and the hydrophilic peripheral arm (subunits Nqo1 to Nqo6, Nqo9) protruding into the bacterial cytoplasm. The hydrophilic domain contains all the redox centers.

The protein localises to the cell inner membrane. The enzyme catalyses a quinone + NADH + 5 H(+)(in) = a quinol + NAD(+) + 4 H(+)(out). In terms of biological role, NDH-1 shuttles electrons from NADH, via FMN and iron-sulfur (Fe-S) centers, to quinones in the respiratory chain. The immediate electron acceptor for the enzyme in this species is believed to be ubiquinone. Couples the redox reaction to proton translocation (for every two electrons transferred, four hydrogen ions are translocated across the cytoplasmic membrane), and thus conserves the redox energy in a proton gradient. This is NADH-quinone oxidoreductase subunit 4 (nqo4) from Paracoccus denitrificans.